The chain runs to 320 residues: o-succinylbenzoate synthase (320 aa).

Lys133 serves as the catalytic Proton donor. Residues Asp161, Glu190, and Asp213 each contribute to the Mg(2+) site. Lys235 serves as the catalytic Proton acceptor.

This sequence belongs to the mandelate racemase/muconate lactonizing enzyme family. MenC type 1 subfamily. A divalent metal cation is required as a cofactor.

It catalyses the reaction (1R,6R)-6-hydroxy-2-succinyl-cyclohexa-2,4-diene-1-carboxylate = 2-succinylbenzoate + H2O. The protein operates within quinol/quinone metabolism; 1,4-dihydroxy-2-naphthoate biosynthesis; 1,4-dihydroxy-2-naphthoate from chorismate: step 4/7. Its pathway is quinol/quinone metabolism; menaquinone biosynthesis. Its function is as follows. Converts 2-succinyl-6-hydroxy-2,4-cyclohexadiene-1-carboxylate (SHCHC) to 2-succinylbenzoate (OSB). The chain is o-succinylbenzoate synthase from Salmonella paratyphi C (strain RKS4594).